We begin with the raw amino-acid sequence, 101 residues long: Enhancer of yellow 2 transcription factor (101 aa).

It belongs to the ENY2 family. Component of the nuclear pore complex (NPC)-associated AMEX complex (anchoring and mRNA export complex), composed of at least e(y)2 and xmas-2. Component of the SAGA transcription coactivator-HAT complexes, at least composed of Ada2b, e(y)2, Pcaf/Gcn5, Taf10 and Nipped-A/Trrap. Within the SAGA complex, e(y)2, Sgf11, and not/nonstop form an additional subcomplex of SAGA called the DUB module (deubiquitination module). Component of the THO complex, composed of at least e(y)2, HPR1, THO2, THOC5, THOC6 and THOC7. Interacts with e(y)1. Interacts with su(Hw) (via zinc fingers). Interacts with xmas-2; required for localization to the nuclear periphery. Interacts with the nuclear pore complex (NPC).

The protein resides in the nucleus. Its subcellular location is the nucleoplasm. It localises to the cytoplasm. In terms of biological role, involved in mRNA export coupled transcription activation by association with both the AMEX and the SAGA complexes. The SAGA complex is a multiprotein complex that activates transcription by remodeling chromatin and mediating histone acetylation and deubiquitination. Within the SAGA complex, participates in a subcomplex that specifically deubiquitinates histone H2B. The SAGA complex is recruited to specific gene promoters by activators, where it is required for transcription. Required for nuclear receptor-mediated transactivation. Involved in transcription elongation by recruiting the THO complex onto nascent mRNA. The AMEX complex functions in docking export-competent ribonucleoprotein particles (mRNPs) to the nuclear entrance of the nuclear pore complex (nuclear basket). AMEX participates in mRNA export and accurate chromatin positioning in the nucleus by tethering genes to the nuclear periphery. This Drosophila sechellia (Fruit fly) protein is Enhancer of yellow 2 transcription factor.